The chain runs to 205 residues: Probable GTP-binding protein EngB (205 aa).

The EngB-type G domain maps to 27–201 (TGIEIAFAGR…AVKLDFWFSP (175 aa)). GTP contacts are provided by residues 35–42 (GRSNAGKS), 62–66 (GRTQL), 80–83 (DLPG), 147–150 (TKAD), and 180–182 (FSA). Positions 42 and 64 each coordinate Mg(2+).

This sequence belongs to the TRAFAC class TrmE-Era-EngA-EngB-Septin-like GTPase superfamily. EngB GTPase family. Mg(2+) serves as cofactor.

Necessary for normal cell division and for the maintenance of normal septation. The sequence is that of Probable GTP-binding protein EngB from Haemophilus influenzae (strain PittGG).